The primary structure comprises 55 residues: Large ribosomal subunit protein bL33 (55 aa).

Belongs to the bacterial ribosomal protein bL33 family.

The polypeptide is Large ribosomal subunit protein bL33 (Pseudarthrobacter chlorophenolicus (strain ATCC 700700 / DSM 12829 / CIP 107037 / JCM 12360 / KCTC 9906 / NCIMB 13794 / A6) (Arthrobacter chlorophenolicus)).